The following is a 517-amino-acid chain: Perilipin-1 (517 aa).

Serine 81 carries the post-translational modification Phosphoserine. Phosphothreonine is present on threonine 85. 5 positions are modified to phosphoserine: serine 126, serine 130, serine 132, serine 137, and serine 174. The interval 197-217 is disordered; sequence VESAPSSGRQKTQKAPKAKPS. Phosphothreonine is present on residues threonine 224, threonine 299, and threonine 301. The tract at residues 285–321 is disordered; the sequence is HNLAASKDENHEDQTDTEGEETDEEEEEEESEAEENV. The interval 291–322 is required for interaction with CIDEC; the sequence is KDENHEDQTDTEGEETDEEEEEEESEAEENVL. Acidic residues predominate over residues 299–319; sequence TDTEGEETDEEEEEEESEAEE. 11 positions are modified to phosphoserine: serine 315, serine 385, serine 387, proline 408, serine 411, serine 434, serine 436, serine 440, serine 460, serine 492, and serine 494. Residues 415-495 form a disordered region; that stretch reads PESEFQDIDN…KPARRVSDSF (81 aa). Over residues 483 to 492 the composition is skewed to basic and acidic residues; the sequence is PREKPARRVS.

The protein belongs to the perilipin family. Interacts with ABHD5. Interacts with CIDEC. Interacts with AQP7. Major cAMP-dependent protein kinase substrate in adipocytes, also dephosphorylated by PP1. When phosphorylated, may be maximally sensitive to HSL. When unphosphorylated, may play a role in the inhibition of lipolysis, by acting as a barrier in lipid droplet. In terms of processing, the N-terminus is blocked. Adipocytes.

The protein localises to the endoplasmic reticulum. It localises to the lipid droplet. In terms of biological role, modulator of adipocyte lipid metabolism. Coats lipid storage droplets to protect them from breakdown by hormone-sensitive lipase (HSL). Its absence may result in leanness. Plays a role in unilocular lipid droplet formation by activating CIDEC. Their interaction promotes lipid droplet enlargement and directional net neutral lipid transfer. May modulate lipolysis and triglyceride levels. This chain is Perilipin-1 (Plin1), found in Rattus norvegicus (Rat).